Reading from the N-terminus, the 282-residue chain is DNA-binding transcriptional repressor YiaJ (282 aa).

Residues 1–20 (MGKEVMGKKENEMAQEKERP) are compositionally biased toward basic and acidic residues. Positions 1–21 (MGKEVMGKKENEMAQEKERPA) are disordered. The HTH iclR-type domain occupies 23–85 (SQSLFRGLML…PAAGSYRLTT (63 aa)). The H-T-H motif DNA-binding region spans 45 to 64 (LAHLSELAGLNKSTVHRLLQ). The region spanning 100-272 (IIHIAAPHLE…AQAISNELGF (173 aa)) is the IclR-ED domain.

Functionally, negatively controls the transcription of the yiaKLMNOPQRS operon, which may be involved in the utilization of 2,3-diketo-L-gulonate. The polypeptide is DNA-binding transcriptional repressor YiaJ (yiaJ) (Escherichia coli (strain K12)).